The primary structure comprises 76 residues: U1-cyrtautoxin-As1d (76 aa).

4 cysteine pairs are disulfide-bonded: cysteine 23–cysteine 37, cysteine 30–cysteine 51, cysteine 36–cysteine 66, and cysteine 69–cysteine 76.

This sequence belongs to the neurotoxin 21 family. In terms of tissue distribution, expressed by the venom gland.

The protein localises to the secreted. Neurotoxin with probable ion channel impairing activity. In vivo, is both paralytic and lethal, when injected into lepidopteran larvae. The protein is U1-cyrtautoxin-As1d of Apomastus schlingeri (Trap-door spider).